The chain runs to 145 residues: Ribonuclease H (145 aa).

Residues 1-141 (MQEVELFTDG…VDELANQAMD (141 aa)) form the RNase H type-1 domain. Residues aspartate 9, glutamate 47, aspartate 69, and aspartate 133 each coordinate Mg(2+).

Belongs to the RNase H family. Monomer. It depends on Mg(2+) as a cofactor.

It localises to the cytoplasm. It carries out the reaction Endonucleolytic cleavage to 5'-phosphomonoester.. Endonuclease that specifically degrades the RNA of RNA-DNA hybrids. This is Ribonuclease H from Hydrogenovibrio crunogenus (strain DSM 25203 / XCL-2) (Thiomicrospira crunogena).